A 20-amino-acid polypeptide reads, in one-letter code: Venom prothrombin activator notanarin-D (20 aa).

The region spanning 1–10 is the Gla domain; it reads SNSLFEEVRP. Glu6 and Glu7 each carry 4-carboxyglutamate. One can recognise a Peptidase S1 domain in the interval 11–20; the sequence is IVNGMDCKLG.

Belongs to the peptidase S1 family. Snake venom subfamily. As to quaternary structure, heterodimer of a light chain and a heavy chain; disulfide-linked. In terms of processing, gamma-carboxyglutamate residues are formed by vitamin K dependent carboxylation. These residues are essential for the binding of calcium. As to expression, expressed by the venom gland.

The protein localises to the secreted. The catalysed reaction is Selective cleavage of Arg-|-Thr and then Arg-|-Ile bonds in prothrombin to form thrombin.. Its function is as follows. Snake prothrombin activator that attacks the hemostatic system of prey. This protein is functionally similar to blood coagulation factor Xa. This chain is Venom prothrombin activator notanarin-D, found in Notechis scutatus niger (Peninsula tiger snake).